The following is a 342-amino-acid chain: MNLLLNYELFLAKAITFLFIIFITPFIFNIIKRKRTDQKKFKIILLEEKYKNIKKDILLSKMNKLEKKKWIKEEKKKDKEFEKKNKNNIVTLKKKTLFVLDFKGGIHAHEVIGLREEISAILLAANKDDEVLLRLESSGGVIHGYGLAAAQLERLRQNKIRLIISIDKIAASGGYMMACVADYIISAPFAIIGSIGVVGQLPNFNKLLKKCNIDVELHTAGDYKRTLTMFGQNTELTRKKFCQELNLTHEIFKKFIKKMRPCLDIENISNGEHWFGTIAFKKNLVDEINTSDNILMSKMKEKYTLLNIQYIYKNKKLENFTSFIIENIKIIIIKIFSYKKIL.

A helical transmembrane segment spans residues 10–32 (FLAKAITFLFIIFITPFIFNIIK). The Nucleophile role is filled by Ser172. Lys224 acts as the Proton donor/acceptor in catalysis.

Belongs to the peptidase S49 family.

The protein resides in the cell membrane. Functionally, possible protease. This is Probable protease SohB (sohB) from Buchnera aphidicola subsp. Schizaphis graminum (strain Sg).